Consider the following 472-residue polypeptide: Ribulose bisphosphate carboxylase large chain (472 aa).

Asparagine 116 and threonine 166 together coordinate substrate. The Proton acceptor role is filled by lysine 168. Lysine 170 lines the substrate pocket. The Mg(2+) site is built by lysine 194, aspartate 196, and glutamate 197. Lysine 194 is modified (N6-carboxylysine). Histidine 287 (proton acceptor) is an active-site residue. Substrate is bound by residues arginine 288, histidine 320, and serine 372.

The protein belongs to the RuBisCO large chain family. Type I subfamily. As to quaternary structure, heterohexadecamer of 8 large chains and 8 small chains. Mg(2+) is required as a cofactor.

The enzyme catalyses 2 (2R)-3-phosphoglycerate + 2 H(+) = D-ribulose 1,5-bisphosphate + CO2 + H2O. It catalyses the reaction D-ribulose 1,5-bisphosphate + O2 = 2-phosphoglycolate + (2R)-3-phosphoglycerate + 2 H(+). Its function is as follows. RuBisCO catalyzes two reactions: the carboxylation of D-ribulose 1,5-bisphosphate, the primary event in carbon dioxide fixation, as well as the oxidative fragmentation of the pentose substrate. Both reactions occur simultaneously and in competition at the same active site. The protein is Ribulose bisphosphate carboxylase large chain of Nitrobacter vulgaris.